A 496-amino-acid chain; its full sequence is RNA-binding motif protein, Y chromosome, family 1 member F/J (496 aa).

One can recognise an RRM domain in the interval 8–85 (GKLFIGGLNR…KAIKVEQAKK (78 aa)). Disordered stretches follow at residues 81 to 345 (EQAK…YAPP) and 452 to 496 (KDQR…SSRY). Low complexity-rich tracts occupy residues 97–114 (PASS…SARG) and 149–159 (PVKRGPSSRSG). A compositionally biased stretch (polar residues) spans 175 to 184 (NSWMGSQGPM). Basic and acidic residues-rich tracts occupy residues 204–214 (RNDRMSTRHDG), 242–253 (DNGHSNRDEHSS), 276–289 (AYRD…DESY), 313–326 (GYRD…HESY), 335–345 (SSRETRDYAPP), and 484–496 (GESR…SSRY).

In terms of assembly, interacts with splicing factor proteins SFRS3/SRP20, TRA2B/SFRS10, KHDRBS1/SAM68 and KHDRBS3. Testis-specific.

Its subcellular location is the nucleus. In terms of biological role, RNA-binding protein which may be involved in spermatogenesis. Required for sperm development, possibly by participating in pre-mRNA splicing in the testis. The sequence is that of RNA-binding motif protein, Y chromosome, family 1 member F/J (RBMY1F) from Homo sapiens (Human).